Here is an 87-residue protein sequence, read N- to C-terminus: Small ribosomal subunit protein bS20 (87 aa).

The segment at 1-22 (MANSAQARKRARQSVKQRAHNA) is disordered. Over residues 7–19 (ARKRARQSVKQRA) the composition is skewed to basic residues.

Belongs to the bacterial ribosomal protein bS20 family.

In terms of biological role, binds directly to 16S ribosomal RNA. The chain is Small ribosomal subunit protein bS20 from Neisseria gonorrhoeae (strain ATCC 700825 / FA 1090).